The following is a 208-amino-acid chain: ATP-dependent Clp protease proteolytic subunit (208 aa).

The Nucleophile role is filled by Ser98. His123 is a catalytic residue.

This sequence belongs to the peptidase S14 family. As to quaternary structure, fourteen ClpP subunits assemble into 2 heptameric rings which stack back to back to give a disk-like structure with a central cavity, resembling the structure of eukaryotic proteasomes.

The protein localises to the cytoplasm. The catalysed reaction is Hydrolysis of proteins to small peptides in the presence of ATP and magnesium. alpha-casein is the usual test substrate. In the absence of ATP, only oligopeptides shorter than five residues are hydrolyzed (such as succinyl-Leu-Tyr-|-NHMec, and Leu-Tyr-Leu-|-Tyr-Trp, in which cleavage of the -Tyr-|-Leu- and -Tyr-|-Trp bonds also occurs).. Cleaves peptides in various proteins in a process that requires ATP hydrolysis. Has a chymotrypsin-like activity. Plays a major role in the degradation of misfolded proteins. The polypeptide is ATP-dependent Clp protease proteolytic subunit (Wolbachia pipientis subsp. Culex pipiens (strain wPip)).